We begin with the raw amino-acid sequence, 247 residues long: 3(1)-hydroxy-L-isoleucine 4-dioxygenase (247 aa).

Fe cation is bound by residues His160, Asp162, and His213.

Belongs to the iron/ascorbate-dependent oxidoreductase family. Requires L-ascorbate as cofactor. It depends on Fe(2+) as a cofactor.

The catalysed reaction is 3(1)-hydroxy-L-isoleucine + 2-oxoglutarate + O2 = (4S)-3(1),4-dihydroxy-L-isoleucine + succinate + CO2. In terms of biological role, catalyzes the hydroxylation of L-4'-hydroxyisoleucine (4'-HIL) at the C-4 position to form L-4,4'-dihydroxyisoleucine (4,4'-DIHIL). Together with HilA, catalyzes the two step conversion of L-isoleucine into L-4,4'-dihydroxyisoleucine. In vitro, in the absence of HilA, can also catalyze the oxidation of L-methionine and the C-4-hydroxylation of L-leucine and L-isoleucine. The chain is 3(1)-hydroxy-L-isoleucine 4-dioxygenase from Pantoea ananatis (strain AJ13355).